The primary structure comprises 393 residues: Protein TsgA (393 aa).

12 helical membrane passes run 11 to 31 (WISF…GMVM), 51 to 71 (FLNA…EIVP), 78 to 98 (FGFI…SLAL), 101 to 121 (AAMF…TFLI), 134 to 154 (LLFT…VAAF), 162 to 182 (WYWV…LTFG), 206 to 226 (IGVL…LGFI), 245 to 265 (ALVS…SFIL), 273 to 293 (ILTV…TGTQ), 298 to 318 (WFIL…ITLG), 332 to 352 (FILT…GPIV), and 361 to 381 (LLTA…LGFV).

Belongs to the major facilitator superfamily. TsgA family.

The protein resides in the cell inner membrane. This Salmonella heidelberg (strain SL476) protein is Protein TsgA.